The primary structure comprises 405 residues: Arginine deiminase (405 aa).

Residue C395 is the Amidino-cysteine intermediate of the active site.

Belongs to the arginine deiminase family.

Its subcellular location is the cytoplasm. The catalysed reaction is L-arginine + H2O = L-citrulline + NH4(+). It participates in amino-acid degradation; L-arginine degradation via ADI pathway; carbamoyl phosphate from L-arginine: step 1/2. In Rhodococcus opacus (strain B4), this protein is Arginine deiminase.